The primary structure comprises 276 residues: MSLWFLVFLSVLQGVTELFPVSSLGHTLLVPALFGMHIDKHAPQLLPFLVALHLGTALALLWYFRARWIALISGFFAQLGGRKNDDGHLMWALIIGTIPTGIVGLLLEKRLERVFHDLRIVAVALIINGVLLWVGDRIQRSRAHQAPEKMTFKQAFFVGLAQIGALIPGFSRSGLTMIAGNVAGLTAEKAAEFSFLLGTPIIFAAGVLELPKLFHARDQLMDALLGGVLTAIAAYLSVRFLMRYFEGRGRLASFGVYCVIAGVFFLGWFMLHPQPV.

The next 8 membrane-spanning stretches (helical) occupy residues 1 to 21 (MSLW…LFPV), 44 to 64 (QLLP…LWYF), 87 to 107 (GHLM…GLLL), 114 to 134 (VFHD…LLWV), 150 to 170 (MTFK…IPGF), 190 to 210 (AAEF…VLEL), 220 to 240 (LMDA…SVRF), and 251 to 271 (LASF…WFML).

The protein belongs to the UppP family.

Its subcellular location is the cell inner membrane. It carries out the reaction di-trans,octa-cis-undecaprenyl diphosphate + H2O = di-trans,octa-cis-undecaprenyl phosphate + phosphate + H(+). Its function is as follows. Catalyzes the dephosphorylation of undecaprenyl diphosphate (UPP). Confers resistance to bacitracin. This chain is Undecaprenyl-diphosphatase 2, found in Burkholderia ambifaria (strain ATCC BAA-244 / DSM 16087 / CCUG 44356 / LMG 19182 / AMMD) (Burkholderia cepacia (strain AMMD)).